A 53-amino-acid polypeptide reads, in one-letter code: Conotoxin Ac4.3b (53 aa).

A propeptide spanning residues 1–11 (SDVRNAAVHER) is cleaved from the precursor. The residue at position 12 (Gln-12) is a Pyrrolidone carboxylic acid. The residue at position 14 (Glu-14) is a 4-carboxyglutamate. Ser-18 carries O-linked (HexNAc...) serine glycosylation. Residues Pro-28, Pro-33, and Pro-48 each carry the 4-hydroxyproline modification. Proline amide is present on Pro-48. The propeptide occupies 49 to 53 (GRRND).

Belongs to the conotoxin A superfamily. In terms of processing, contains 3 disulfide bonds. In terms of tissue distribution, expressed by the venom duct.

It localises to the secreted. In terms of biological role, probable neurotoxin with ion channel inhibitor activity. This is Conotoxin Ac4.3b from Conus achatinus (Little frog cone).